A 78-amino-acid chain; its full sequence is Large ribosomal subunit protein bL28 (78 aa).

The protein belongs to the bacterial ribosomal protein bL28 family.

The chain is Large ribosomal subunit protein bL28 from Glaesserella parasuis serovar 5 (strain SH0165) (Haemophilus parasuis).